We begin with the raw amino-acid sequence, 258 residues long: 5'-nucleotidase SurE (258 aa).

A divalent metal cation contacts are provided by aspartate 10, aspartate 11, serine 41, and asparagine 96.

This sequence belongs to the SurE nucleotidase family. The cofactor is a divalent metal cation.

It localises to the cytoplasm. It catalyses the reaction a ribonucleoside 5'-phosphate + H2O = a ribonucleoside + phosphate. Its function is as follows. Nucleotidase that shows phosphatase activity on nucleoside 5'-monophosphates. The chain is 5'-nucleotidase SurE from Sorangium cellulosum (strain So ce56) (Polyangium cellulosum (strain So ce56)).